The primary structure comprises 356 residues: Protein HEXIM1 (356 aa).

2 stretches are compositionally biased toward basic and acidic residues: residues 1 to 11 and 24 to 47; these read MAEPLLSEHQH and VHEE…DSRW. Residues 1-160 are disordered; sequence MAEPLLSEHQ…RRRPSKKKRH (160 aa). The segment covering 48–58 has biased composition (polar residues); sequence QSRASLQSGSR. Over residues 84–93 the composition is skewed to basic and acidic residues; that stretch reads CLEKGEKGQN. Phosphoserine occurs at positions 98 and 103. Residues 145 to 160 show a composition bias toward basic residues; the sequence is LGKKKHRRRPSKKKRH. The segment at 147–174 is basic region; mediates nuclear localization and interaction with 7SK snRNA and NR3C1; it reads KKKHRRRPSKKKRHWKPYYKLTWEEKKK. The interval 199 to 202 is interaction with P-TEFb; that stretch reads PYNT. The autoinhibitory acidic region; in absence of 7SK snRNA interacts with the basic region preventing interaction with P-TEFb and modulating subcellular localization stretch occupies residues 207 to 247; it reads MDDHDQEEPDLKTGLYPKRAAAKSDDTSDEDFVEEAGEEDG. Positions 209–259 are disordered; the sequence is DHDQEEPDLKTGLYPKRAAAKSDDTSDEDFVEEAGEEDGGSDGMGGDGSEF. Serine 230 is subject to Phosphoserine. Threonine 233 bears the Phosphothreonine mark. Acidic residues predominate over residues 233 to 248; sequence TSDEDFVEEAGEEDGG. Residues serine 234, serine 249, and serine 257 each carry the phosphoserine modification. The stretch at 280 to 346 forms a coiled coil; the sequence is SKQELIKEYL…LTENELHRQQ (67 aa). The mediates interaction with CCNT1 stretch occupies residues 283 to 311; sequence ELIKEYLELEKCLSRKEDENNRLRLESKR. The segment at 307 to 352 is required for inhibition of ESR1-dependent transcription; it reads LESKRLGGVDARVRELELELDRLRAENRQLLTENELHRQQERAPPS. The interval 337-356 is disordered; that stretch reads LTENELHRQQERAPPSKFGD.

This sequence belongs to the HEXIM family. Homooligomer and heterooligomer with HEXIM2; probably dimeric. Core component of the 7SK RNP complex, at least composed of 7SK RNA, LARP7, MEPCE, HEXIM1 (or HEXIM2) and P-TEFb (composed of CDK9 and CCNT1/cyclin-T1). Interacts with the N-CoR complex through NCOR1. Interacts with ESR1 and NR3C1. May interact with NF-kappa-B through RELA. Interacts with CCNT2; mediates formation of a tripartite complex with KPNA2. Part of the HDP-RNP complex composed of at least HEXIM1, PRKDC, XRCC5, XRCC6, paraspeckle proteins (SFPQ, NONO, PSPC1, RBM14, and MATR3) and NEAT1 non-coding RNA.

The protein resides in the nucleus. The protein localises to the cytoplasm. Transcriptional regulator which functions as a general RNA polymerase II transcription inhibitor. Core component of the 7SK RNP complex: in cooperation with 7SK snRNA sequesters P-TEFb in a large inactive 7SK snRNP complex preventing RNA polymerase II phosphorylation and subsequent transcriptional elongation. May also regulate NF-kappa-B, ESR1, NR3C1 and CIITA-dependent transcriptional activity. Plays a role in the regulation of DNA virus-mediated innate immune response by assembling into the HDP-RNP complex, a complex that serves as a platform for IRF3 phosphorylation and subsequent innate immune response activation through the cGAS-STING pathway. This Rattus norvegicus (Rat) protein is Protein HEXIM1 (Hexim1).